A 479-amino-acid polypeptide reads, in one-letter code: UDP-N-acetylmuramoyl-L-alanyl-D-glutamate--2,6-diaminopimelate ligase (479 aa).

Ser-21 is a binding site for UDP-N-acetyl-alpha-D-muramoyl-L-alanyl-D-glutamate. Residue 98 to 104 coordinates ATP; sequence GTNGKSS. Residues 144-145, Ser-171, Gln-177, and Arg-179 contribute to the UDP-N-acetyl-alpha-D-muramoyl-L-alanyl-D-glutamate site; that span reads TT. Lys-211 is subject to N6-carboxylysine. Residues Arg-372, 396 to 399, Gly-446, and Glu-450 contribute to the meso-2,6-diaminopimelate site; that span reads DNPR. Residues 396–399 carry the Meso-diaminopimelate recognition motif motif; it reads DNPR.

It belongs to the MurCDEF family. MurE subfamily. Mg(2+) serves as cofactor. Carboxylation is probably crucial for Mg(2+) binding and, consequently, for the gamma-phosphate positioning of ATP.

It localises to the cytoplasm. It carries out the reaction UDP-N-acetyl-alpha-D-muramoyl-L-alanyl-D-glutamate + meso-2,6-diaminopimelate + ATP = UDP-N-acetyl-alpha-D-muramoyl-L-alanyl-gamma-D-glutamyl-meso-2,6-diaminopimelate + ADP + phosphate + H(+). It functions in the pathway cell wall biogenesis; peptidoglycan biosynthesis. Its function is as follows. Catalyzes the addition of meso-diaminopimelic acid to the nucleotide precursor UDP-N-acetylmuramoyl-L-alanyl-D-glutamate (UMAG) in the biosynthesis of bacterial cell-wall peptidoglycan. The polypeptide is UDP-N-acetylmuramoyl-L-alanyl-D-glutamate--2,6-diaminopimelate ligase (Rickettsia conorii (strain ATCC VR-613 / Malish 7)).